A 402-amino-acid polypeptide reads, in one-letter code: Bacillibactin exporter (402 aa).

11 helical membrane-spanning segments follow: residues 4 to 24 (IIAL…LIPV), 39 to 59 (VSLI…IAGY), 69 to 89 (ILLP…FAST), 104 to 124 (LQGI…GDLF), 162 to 182 (FVPF…VLFL), 212 to 232 (WLYT…GVLF), 247 to 267 (VAKG…SFIA), 278 to 298 (MKFC…ALWW), 302 to 322 (FYFL…ALPA), 342 to 362 (FYNS…AALM), and 368 to 388 (IIFI…LFTV).

The protein belongs to the major facilitator superfamily.

The protein resides in the cell membrane. Functionally, involved in secretion of bacillibactin. The sequence is that of Bacillibactin exporter (ymfD) from Bacillus subtilis (strain 168).